Consider the following 184-residue polypeptide: Exosome complex protein LRP1 (184 aa).

The interval 157–184 (DSTDHIRKASSKKSKRLDKVGKKKGGKK) is disordered. Positions 164–184 (KASSKKSKRLDKVGKKKGGKK) are enriched in basic residues.

It belongs to the C1D family. As to quaternary structure, associates with nuclear form of the RNA exosome complex. Interacts with RRP4, RRP6, RRP45 and RRP46.

Its subcellular location is the nucleus. In terms of biological role, required for exosome-dependent processing of pre-rRNA and small nucleolar RNA (snRNA) precursors. Involved in processing of 35S pre-rRNA at the A0, A1 and A2 sites. Required for activity of RRP6 in 7S pre-rRNA processing. Also has a role in 3'-processing of U4 and U5 small nuclear RNAs (snRNAs). Acts as a mRNA export factor. Mediates mRNA degradation upon UV irradiation. Maintains genome integrity where it is involved in both non-homologous end joining (NHEJ) and homologous recombination pathway repair of double strand DNA breaks. During NHEJ, required for joining 3'-overhanging ends. Also involved in telomere length regulation and maintenance. The sequence is that of Exosome complex protein LRP1 (LRP1) from Saccharomyces cerevisiae (strain ATCC 204508 / S288c) (Baker's yeast).